Reading from the N-terminus, the 72-residue chain is Brevinin-2GHb (72 aa).

Residues 1-22 (MFTMKKSLLLLFFLGTVSLSLC) form the signal peptide. The propeptide occupies 23–42 (EQERGADEDDGGEMTEELKR). An intrachain disulfide couples cysteine 66 to cysteine 72.

In terms of tissue distribution, expressed by the skin glands.

Its subcellular location is the secreted. In terms of biological role, antimicrobial peptide. Active against the Gram-positive bacteria S.aureus FDA209P (MIC=16.5 ug/ml) and B.subtilis ATCC 6633 (MIC&gt;64 ug/ml), and the Gram-negative bacteria E.coli O111 (MIC=8.2 ug/ml) and E.coli ATCC 25922 (MIC=8.2 ug/ml). Not active against the fungus C.albicans. The polypeptide is Brevinin-2GHb (Sylvirana guentheri (Gunther's frog)).